A 227-amino-acid polypeptide reads, in one-letter code: Cytidylate kinase (227 aa).

Position 12-20 (12-20) interacts with ATP; the sequence is GPSGAGKGT.

This sequence belongs to the cytidylate kinase family. Type 1 subfamily.

It localises to the cytoplasm. The enzyme catalyses CMP + ATP = CDP + ADP. The catalysed reaction is dCMP + ATP = dCDP + ADP. The polypeptide is Cytidylate kinase (Shigella boydii serotype 18 (strain CDC 3083-94 / BS512)).